Consider the following 233-residue polypeptide: Protein Thf1 (233 aa).

Residues 183-205 are a coiled coil; the sequence is DKLSKDLELYRSNLDKMTQALAV. Residues 213 to 233 are disordered; sequence DRKKREQRQQQASTPVAPPNE.

The protein belongs to the THF1 family.

Its function is as follows. May be involved in photosynthetic membrane biogenesis. The chain is Protein Thf1 from Trichormus variabilis (strain ATCC 29413 / PCC 7937) (Anabaena variabilis).